Reading from the N-terminus, the 140-residue chain is Con-Ins Im2 (140 aa).

An N-terminal signal peptide occupies residues Met1 to Gly29. 4 cysteine pairs are disulfide-bonded: Cys35–Cys123, Cys50–Cys126, Cys62–Cys139, and Cys125–Cys130. Positions Pro64 to Arg110 are cleaved as a propeptide — c peptide. Glu134 bears the 4-carboxyglutamate; partial mark.

Belongs to the insulin family. Heterodimer of A and B chains; disulfide-linked. In terms of tissue distribution, expressed by the venom gland.

Its subcellular location is the secreted. Functionally, this venom insulin facilitates prey capture by rapidly inducing hypoglycemic shock. Intraperitoneal injection of this peptide into zebrafish lowers blood glucose with the same potency than human insulin. In vivo, when applied to water, this peptide reduces overall locomotor activity of zebrafish larvae, observed as a significant decrease in the percentage of time spent swimming and movement frequency. The sequence is that of Con-Ins Im2 from Conus imperialis (Imperial cone).